The following is a 105-amino-acid chain: Insulin (105 aa).

Residues M1–A24 form the signal peptide. 3 cysteine pairs are disulfide-bonded: C31/C91, C43/C104, and C90/C95. A propeptide spans E57–Q82 (c peptide).

Belongs to the insulin family. As to quaternary structure, heterodimer of a B chain and an A chain linked by two disulfide bonds.

Its subcellular location is the secreted. Functionally, insulin decreases blood glucose concentration. It increases cell permeability to monosaccharides, amino acids and fatty acids. It accelerates glycolysis, the pentose phosphate cycle, and glycogen synthesis in liver. The chain is Insulin (INS) from Bos taurus (Bovine).